A 459-amino-acid chain; its full sequence is uncharacterized protein (459 aa).

A TRAM domain is found at 9-67 (KLEVGQTFPVTIKRLGINGEGVGYFKRQVVFIPGALPGEEVVAETTKIQRGFAEAKVKK). [4Fe-4S] cluster-binding residues include C80, C86, C89, and C168. The S-adenosyl-L-methionine site is built by Q292, Y321, D342, and D390. Catalysis depends on C417, which acts as the Nucleophile.

The protein belongs to the class I-like SAM-binding methyltransferase superfamily. RNA M5U methyltransferase family.

This is an uncharacterized protein from Bacillus cereus (strain ATCC 10987 / NRS 248).